An 88-amino-acid chain; its full sequence is Small ribosomal subunit protein bS16 (88 aa).

This sequence belongs to the bacterial ribosomal protein bS16 family.

The chain is Small ribosomal subunit protein bS16 from Anaeromyxobacter sp. (strain K).